The sequence spans 139 residues: Oocyte zinc finger protein XlCOF14 (139 aa).

C2H2-type zinc fingers lie at residues 6–28 (FICS…SNVH), 33–55 (FPCT…QKIH), 61–83 (HKCT…HLSH), 89–111 (FSCF…QLSH), and 117–139 (FVCS…CHIH).

It belongs to the krueppel C2H2-type zinc-finger protein family.

The protein resides in the nucleus. Functionally, may be involved in transcriptional regulation. The protein is Oocyte zinc finger protein XlCOF14 of Xenopus laevis (African clawed frog).